Reading from the N-terminus, the 308-residue chain is Porphobilinogen deaminase (308 aa).

Cys240 bears the S-(dipyrrolylmethanemethyl)cysteine mark.

Belongs to the HMBS family. In terms of assembly, monomer. The cofactor is dipyrromethane.

It carries out the reaction 4 porphobilinogen + H2O = hydroxymethylbilane + 4 NH4(+). The protein operates within porphyrin-containing compound metabolism; protoporphyrin-IX biosynthesis; coproporphyrinogen-III from 5-aminolevulinate: step 2/4. Functionally, tetrapolymerization of the monopyrrole PBG into the hydroxymethylbilane pre-uroporphyrinogen in several discrete steps. This Desulfitobacterium hafniense (strain DSM 10664 / DCB-2) protein is Porphobilinogen deaminase.